We begin with the raw amino-acid sequence, 89 residues long: UPF0335 protein RPC_3979 (89 aa).

This sequence belongs to the UPF0335 family.

This chain is UPF0335 protein RPC_3979, found in Rhodopseudomonas palustris (strain BisB18).